The following is a 103-amino-acid chain: Large ribosomal subunit protein bL21 (103 aa).

The protein belongs to the bacterial ribosomal protein bL21 family. As to quaternary structure, part of the 50S ribosomal subunit. Contacts protein L20.

This protein binds to 23S rRNA in the presence of protein L20. The protein is Large ribosomal subunit protein bL21 of Kineococcus radiotolerans (strain ATCC BAA-149 / DSM 14245 / SRS30216).